The chain runs to 296 residues: uncharacterized protein (296 aa).

A coiled-coil region spans residues 129–170 (VKELKDLIRTVADEHMKMKREHEAAMKELTLLINNQKQQQQQ). The segment at 165–187 (KQQQQQPVPMPRNSTATRPKNLA) is disordered.

This is an uncharacterized protein from Ostreid herpesvirus 1 (isolate France) (OsHV-1).